A 467-amino-acid polypeptide reads, in one-letter code: RuvB-like helicase 2 (467 aa).

73–80 (GPPSTGKT) provides a ligand contact to ATP.

It belongs to the RuvB family. May form heterododecamers with RVB1. Component of the SWR1 chromatin remodeling complex, the INO80 chromatin remodeling complex, and of the R2TP complex.

It is found in the nucleus. It carries out the reaction ATP + H2O = ADP + phosphate + H(+). Its function is as follows. DNA helicase which participates in several chromatin remodeling complexes, including the SWR1 and the INO80 complexes. The SWR1 complex mediates the ATP-dependent exchange of histone H2A for the H2A variant HZT1 leading to transcriptional regulation of selected genes by chromatin remodeling. The INO80 complex remodels chromatin by shifting nucleosomes and is involved in DNA repair. Also involved in pre-rRNA processing. The protein is RuvB-like helicase 2 (RVB2) of Kluyveromyces lactis (strain ATCC 8585 / CBS 2359 / DSM 70799 / NBRC 1267 / NRRL Y-1140 / WM37) (Yeast).